Here is a 91-residue protein sequence, read N- to C-terminus: Ragulator complex protein LAMTOR5 (91 aa).

The protein belongs to the LAMTOR5 family. Part of the Ragulator complex composed of lamtor1, lamtor2, lamtor3, lamtor4 and lamtor5. The Ragulator complex interacts with slc38a9; the probable amino acid sensor. Component of the lysosomal folliculin complex (LFC).

The protein resides in the cytoplasm. It localises to the lysosome. Functionally, as part of the Ragulator complex it is involved in amino acid sensing and activation of mTORC1, a signaling complex promoting cell growth in response to growth factors, energy levels, and amino acids. Activated by amino acids through a mechanism involving the lysosomal V-ATPase, the Ragulator plays a dual role for the small GTPases Rag (RagA/RRAGA, RagB/RRAGB, RagC/RRAGC and/or RagD/RRAGD): it (1) acts as a guanine nucleotide exchange factor (GEF), activating the small GTPases Rag and (2) mediates recruitment of Rag GTPases to the lysosome membrane. Activated Ragulator and Rag GTPases function as a scaffold recruiting mTORC1 to lysosomes where it is in turn activated. This Xenopus tropicalis (Western clawed frog) protein is Ragulator complex protein LAMTOR5 (lamtor5).